Here is a 79-residue protein sequence, read N- to C-terminus: CDC42 small effector protein 1-A (79 aa).

2 S-palmitoyl cysteine lipidation sites follow: C10 and C11. Positions I30–G43 constitute a CRIB domain.

The protein belongs to the CDC42SE/SPEC family.

The protein localises to the cytoplasm. It localises to the cytoskeleton. The protein resides in the cell membrane. Functionally, probably involved in the organization of the actin cytoskeleton by acting downstream of CDC42, inducing actin filament assembly. The chain is CDC42 small effector protein 1-A (cdc42se1-a) from Xenopus laevis (African clawed frog).